The chain runs to 979 residues: Chromosome partition protein Smc (979 aa).

33–40 (PNGSGKSN) lines the ATP pocket. A coiled-coil region spans residues 169 to 400 (SKYKLDKEEA…INILKQQFEN (232 aa)). Residues 419-538 (DGYIGLASEL…DNVDNANRIA (120 aa)) form the SMC hinge domain. Coiled coils occupy residues 572-716 (ILNY…HSDS) and 750-818 (SLDL…DKII).

Belongs to the SMC family. Homodimer.

It is found in the cytoplasm. In terms of biological role, required for chromosome condensation and partitioning. The polypeptide is Chromosome partition protein Smc (Mesomycoplasma hyorhinis (Mycoplasma hyorhinis)).